The sequence spans 57 residues: Small ribosomal subunit protein bS21 (57 aa).

The disordered stretch occupies residues 32-57; it reads VRKRKHFEKPSVKRKKKSEAARKRKF. Positions 33 to 57 are enriched in basic residues; that stretch reads RKRKHFEKPSVKRKKKSEAARKRKF.

This sequence belongs to the bacterial ribosomal protein bS21 family.

The chain is Small ribosomal subunit protein bS21 from Shouchella clausii (strain KSM-K16) (Alkalihalobacillus clausii).